Consider the following 255-residue polypeptide: HTH-type transcriptional regulator SkgA (255 aa).

One can recognise an HTH merR-type domain in the interval 3–72 (VYTVKQMARL…LKDIQAALDQ (70 aa)). The H-T-H motif DNA-binding region spans 6-25 (VKQMARLSGVSVRALHHYDA).

In terms of biological role, regulates the induction of katG (catalase-peroxidase) in stationary phase. This Caulobacter vibrioides (strain ATCC 19089 / CIP 103742 / CB 15) (Caulobacter crescentus) protein is HTH-type transcriptional regulator SkgA (skgA).